A 407-amino-acid polypeptide reads, in one-letter code: Multifunctional CCA protein (407 aa).

Glycine 8 and arginine 11 together coordinate ATP. 2 residues coordinate CTP: glycine 8 and arginine 11. Positions 21 and 23 each coordinate Mg(2+). ATP-binding residues include arginine 91, arginine 137, and arginine 140. Residues arginine 91, arginine 137, and arginine 140 each coordinate CTP. The HD domain maps to 228–329; it reads SGIHTLMVAQ…IKIFDKMDVW (102 aa).

Belongs to the tRNA nucleotidyltransferase/poly(A) polymerase family. Bacterial CCA-adding enzyme type 1 subfamily. Monomer. Can also form homodimers and oligomers. Mg(2+) serves as cofactor. It depends on Ni(2+) as a cofactor.

The catalysed reaction is a tRNA precursor + 2 CTP + ATP = a tRNA with a 3' CCA end + 3 diphosphate. The enzyme catalyses a tRNA with a 3' CCA end + 2 CTP + ATP = a tRNA with a 3' CCACCA end + 3 diphosphate. In terms of biological role, catalyzes the addition and repair of the essential 3'-terminal CCA sequence in tRNAs without using a nucleic acid template. Adds these three nucleotides in the order of C, C, and A to the tRNA nucleotide-73, using CTP and ATP as substrates and producing inorganic pyrophosphate. tRNA 3'-terminal CCA addition is required both for tRNA processing and repair. Also involved in tRNA surveillance by mediating tandem CCA addition to generate a CCACCA at the 3' terminus of unstable tRNAs. While stable tRNAs receive only 3'-terminal CCA, unstable tRNAs are marked with CCACCA and rapidly degraded. The protein is Multifunctional CCA protein of Aliivibrio fischeri (strain MJ11) (Vibrio fischeri).